Reading from the N-terminus, the 434-residue chain is Putative magnesium transporter MRS2-D (434 aa).

2 disordered regions span residues 126–171 (AASP…DGEA) and 279–311 (EASE…AGGG). A compositionally biased stretch (basic and acidic residues) spans 279 to 291 (EASELEDHSSRDE). Transmembrane regions (helical) follow at residues 367–387 (GILL…TGVF) and 405–425 (FPCA…AALL).

It belongs to the CorA metal ion transporter (MIT) (TC 1.A.35.5) family.

It localises to the membrane. Its function is as follows. Putative magnesium transporter. This is Putative magnesium transporter MRS2-D (MRS2-D) from Oryza sativa subsp. japonica (Rice).